Here is a 466-residue protein sequence, read N- to C-terminus: Asparagine--tRNA ligase (466 aa).

The protein belongs to the class-II aminoacyl-tRNA synthetase family. Homodimer.

The protein resides in the cytoplasm. It carries out the reaction tRNA(Asn) + L-asparagine + ATP = L-asparaginyl-tRNA(Asn) + AMP + diphosphate + H(+). This chain is Asparagine--tRNA ligase, found in Shewanella oneidensis (strain ATCC 700550 / JCM 31522 / CIP 106686 / LMG 19005 / NCIMB 14063 / MR-1).